The following is a 1875-amino-acid chain: Neuron navigator 1 (1875 aa).

Met-1 carries the N-acetylmethionine modification. The segment at 1–63 is disordered; it reads MLGSSVKSVQ…GGSGSMAKAS (63 aa). A phosphoserine mark is found at Ser-93 and Ser-145. Disordered stretches follow at residues 115–230 and 280–339; these read SDDM…EERA and SSLR…VGGS. A Phosphothreonine modification is found at Thr-162. Phosphoserine is present on residues Ser-197 and Ser-202. A coiled-coil region spans residues 258 to 283; it reads ESQRKRTVQNVLDLRQNLEETMSSLR. Positions 280–291 are enriched in polar residues; the sequence is SSLRGSQVTHSS. Residues Ser-299, Ser-311, Ser-315, Ser-365, and Ser-394 each carry the phosphoserine modification. Residues 304 to 318 show a composition bias toward low complexity; the sequence is PRSVSSLSNRSSPLS. Disordered regions lie at residues 391-463 and 477-783; these read GYMS…RTDS and SESE…AELP. 2 stretches are compositionally biased toward low complexity: residues 414–428 and 436–456; these read DESSSISSGLSDASD and NASSSLNSLPTTPTASRRSST. A phosphoserine mark is found at Ser-455, Ser-477, Ser-479, and Ser-493. Residues 479-489 are compositionally biased toward basic and acidic residues; sequence SEEKTPKKLEY. The segment covering 506–522 has biased composition (basic and acidic residues); the sequence is ERPESCDDASKGGELKK. Ser-531 carries the phosphoserine modification. At Thr-537 the chain carries Phosphothreonine. The residue at position 544 (Ser-544) is a Phosphoserine. Residue Thr-547 is modified to Phosphothreonine. Residues 558-569 are compositionally biased toward basic and acidic residues; that stretch reads GKPEGKATDKGK. Thr-575 is modified (phosphothreonine). The segment covering 584–594 has biased composition (basic and acidic residues); sequence AGRDRLSDAKK. 2 stretches are compositionally biased toward polar residues: residues 618–638 and 648–658; these read GTATVMQTGSSATLSKIQKSS and RKTSLDVSNSV. Position 651 is a phosphoserine (Ser-651). Arg-690 bears the Omega-N-methylarginine mark. Composition is skewed to polar residues over residues 696 to 712 and 726 to 735; these read VSSSIDPSLLSTKQGGL and GRSTPAPVNQ. A coiled-coil region spans residues 733-758; sequence VNQTDREKEKAKAKAVALDSDNISLK. Phosphoserine occurs at positions 752, 756, 762, 799, and 810. A compositionally biased stretch (polar residues) spans 753 to 772; it reads DNISLKSIGSPESTPKNQAS. Disordered regions lie at residues 800 to 840 and 893 to 982; these read LANL…PLPS and MSLP…SPPA. 2 stretches are compositionally biased toward low complexity: residues 807–818 and 893–902; these read NSNSLDLPSSSD and MSLPSAFPSS. Residue Ser-998 is modified to Phosphoserine. Phosphothreonine is present on Thr-1004. Positions 1070-1161 form a coiled coil; sequence SSAEERMQSE…SEAQAVIQGA (92 aa). Thr-1168 carries the phosphothreonine modification. 4 disordered regions span residues 1172–1202, 1242–1306, 1359–1381, and 1808–1841; these read LRIKRQNSSDSISSLNSITSHSSIGSSKDAD, ATPD…KEVS, VAPGPSSGCTPGQVPGSSALSSP, and KLYHLPPPSVGPHSTASPPEDRTVKDSTPNSLDS. Residue Ser-1179 is modified to Phosphoserine. The segment covering 1179-1198 has biased composition (low complexity); it reads SSDSISSLNSITSHSSIGSS. Positions 1244–1259 are enriched in polar residues; that stretch reads PDSSAPSSPKLQHGST. The segment covering 1260–1281 has biased composition (low complexity); it reads ETASPSIKSSTSSSVGTEVTET. Position 1263 is a phosphoserine (Ser-1263). Residues 1301-1360 are a coiled coil; that stretch reads EKKEVSELRSELWEKEMKLTDIRLEALNSAHQLDQLRETMHNMQLEVDLLKAENDRLKVA. Positions 1365–1381 are enriched in polar residues; sequence SGCTPGQVPGSSALSSP. Position 1380 is a phosphoserine (Ser-1380).

It belongs to the Nav/unc-53 family. As to quaternary structure, interacts with tubulin. In terms of tissue distribution, expressed in heart and brain. Present in brain (at protein level). In adult brain, found almost exclusively in areas of secondary neurogenesis from the hippocampus and the subventricular zone.

It localises to the cytoplasm. The protein localises to the cytoskeleton. Its function is as follows. May be involved in neuronal migration. The sequence is that of Neuron navigator 1 (Nav1) from Mus musculus (Mouse).